The following is a 430-amino-acid chain: Glycine reductase complex component B subunits alpha and beta (430 aa).

Residue Cys242 is the Schiff-base intermediate with substrate; via pyruvic acid of the active site. The residue at position 242 (Cys242) is a Pyruvic acid (Cys).

Heterohexamer of two alpha, two beta and two gamma subunits. Component of the glycine reductase complex, together with components A and C. PB is substrate specific. Post-translationally, the peptide chain is cleaved into beta and alpha chains, and the alpha chain N-terminal cysteine is deaminated and oxidized to form a reactive pyruvoyl group.

It catalyses the reaction acetyl phosphate + [thioredoxin]-disulfide + NH4(+) + H2O = [thioredoxin]-dithiol + glycine + phosphate + H(+). Its function is as follows. In the first step of glycine reductase, the substrate is bound to component PB via a Schiff base intermediate. Then the PB-activated substrate is nucleophilically attacked by the selenol anion of component PA to transform it to a carboxymethylated selenoether and the respective amine. By action of component PC, acetyl phosphate is formed, leaving component PA in its oxidized state. Finally component PA becomes reduced by the thioredoxin system to start a new catalytic cycle of reductive deamination. The protein is Glycine reductase complex component B subunits alpha and beta (grdE) of Acetoanaerobium sticklandii (strain ATCC 12662 / DSM 519 / JCM 1433 / CCUG 9281 / NCIMB 10654 / HF) (Clostridium sticklandii).